Here is an 84-residue protein sequence, read N- to C-terminus: Small ribosomal subunit protein uS17 (84 aa).

This sequence belongs to the universal ribosomal protein uS17 family. In terms of assembly, part of the 30S ribosomal subunit.

Its function is as follows. One of the primary rRNA binding proteins, it binds specifically to the 5'-end of 16S ribosomal RNA. This is Small ribosomal subunit protein uS17 from Legionella pneumophila (strain Paris).